A 72-amino-acid polypeptide reads, in one-letter code: DNA-directed RNA polymerase subunit Rpo10 (72 aa).

Residues Cys7, Cys10, Cys45, and Cys46 each coordinate Zn(2+).

Belongs to the archaeal Rpo10/eukaryotic RPB10 RNA polymerase subunit family. As to quaternary structure, part of the RNA polymerase complex. Requires Zn(2+) as cofactor.

It localises to the cytoplasm. The catalysed reaction is RNA(n) + a ribonucleoside 5'-triphosphate = RNA(n+1) + diphosphate. In terms of biological role, DNA-dependent RNA polymerase (RNAP) catalyzes the transcription of DNA into RNA using the four ribonucleoside triphosphates as substrates. The protein is DNA-directed RNA polymerase subunit Rpo10 of Methanopyrus kandleri (strain AV19 / DSM 6324 / JCM 9639 / NBRC 100938).